We begin with the raw amino-acid sequence, 130 residues long: Small ribosomal subunit protein uS9 (130 aa).

This sequence belongs to the universal ribosomal protein uS9 family.

This is Small ribosomal subunit protein uS9 from Bordetella pertussis (strain Tohama I / ATCC BAA-589 / NCTC 13251).